The sequence spans 86 residues: BolA-like protein 2 (86 aa).

At Met1 the chain carries N-acetylmethionine.

It belongs to the BolA/IbaG family. Interacts with GLRX3; forms a heterotrimeric complex composed by two BOLA2 molecules and one GLRX3 molecule; linked by [2Fe-2S] clusters.

Its subcellular location is the cytoplasm. It localises to the nucleus. Functionally, acts as a cytosolic iron-sulfur (Fe-S) cluster assembly factor that facilitates [2Fe-2S] cluster insertion into a subset of cytosolic proteins. Acts together with the monothiol glutaredoxin GLRX3. This Homo sapiens (Human) protein is BolA-like protein 2 (BOLA2).